We begin with the raw amino-acid sequence, 466 residues long: Cysteine--tRNA ligase (466 aa).

Cys27 serves as a coordination point for Zn(2+). Residues 29–39 carry the 'HIGH' region motif; that stretch reads PTVYNYIHIGN. Zn(2+)-binding residues include Cys207, His232, and Glu236. Residues 264 to 268 carry the 'KMSKS' region motif; that stretch reads KMSKS. Residue Lys267 participates in ATP binding.

Belongs to the class-I aminoacyl-tRNA synthetase family. In terms of assembly, monomer. Zn(2+) is required as a cofactor.

The protein localises to the cytoplasm. It catalyses the reaction tRNA(Cys) + L-cysteine + ATP = L-cysteinyl-tRNA(Cys) + AMP + diphosphate. This Thermoanaerobacter pseudethanolicus (strain ATCC 33223 / 39E) (Clostridium thermohydrosulfuricum) protein is Cysteine--tRNA ligase.